We begin with the raw amino-acid sequence, 229 residues long: Cell division protein FtsQ (229 aa).

Residues 1 to 21 (MIVLLCVIFAFLVYSNWHSWL) form a helical membrane-spanning segment. The Periplasmic portion of the chain corresponds to 22 to 229 (ESLDRNPIRA…AAVGFSPLPK (208 aa)). One can recognise a POTRA domain in the interval 27 to 97 (NPIRAYALTH…DRLSITLIEH (71 aa)).

Belongs to the FtsQ/DivIB family. FtsQ subfamily. Part of a complex composed of FtsB, FtsL and FtsQ.

The protein resides in the cell inner membrane. Functionally, essential cell division protein. May link together the upstream cell division proteins, which are predominantly cytoplasmic, with the downstream cell division proteins, which are predominantly periplasmic. May control correct divisome assembly. This chain is Cell division protein FtsQ, found in Actinobacillus pleuropneumoniae serotype 3 (strain JL03).